The chain runs to 235 residues: Probable transcriptional regulatory protein JJD26997_0557 (235 aa).

This sequence belongs to the TACO1 family.

Its subcellular location is the cytoplasm. The polypeptide is Probable transcriptional regulatory protein JJD26997_0557 (Campylobacter jejuni subsp. doylei (strain ATCC BAA-1458 / RM4099 / 269.97)).